The following is a 468-amino-acid chain: MNLRAGRLNSGMEDEAAEFTSSLTFDHHIFEADIECNMAHTRMLAHEGIIPEEVAAKIIDALESLREEGIEALDMDPSVEDIHMAVENYVTARIGEEAGFMHTGKSRNDQVATDLRLALRERIRTISRELLDFIDSISDLALDHTETVMVGYTHLQHAQPTTLGHHLMAYASSLRRDYERLQDTLKRVDQNPLGSAAMTTTSFPINRELTTRLLGFSDYMKNSMDAVSARDFIAETVFDLSMLAVNLSRISEEMILWSTHEFGIVEIPDEFSSTSSIMPQKKNPDVAEIARAKTSTVQGELVTILGIMKALPYTYNRDLQEVTPHLWRAVDTVLSMIRVVRGMLLGIRVNRNRALELAGANFATATDLADIIVRERGIPFRVAHRIVGRLVTRAIEDGLAPGDVDSVYLDEVSLEVTGRKLELDPELVEKALDPLENVRMRRIPGGPAPEMVRVAVEEMKSFIESERK.

Belongs to the lyase 1 family. Argininosuccinate lyase subfamily.

It is found in the cytoplasm. The enzyme catalyses 2-(N(omega)-L-arginino)succinate = fumarate + L-arginine. It functions in the pathway amino-acid biosynthesis; L-arginine biosynthesis; L-arginine from L-ornithine and carbamoyl phosphate: step 3/3. This Methanothermobacter thermautotrophicus (strain ATCC 29096 / DSM 1053 / JCM 10044 / NBRC 100330 / Delta H) (Methanobacterium thermoautotrophicum) protein is Argininosuccinate lyase.